A 154-amino-acid chain; its full sequence is Protein X (154 aa).

A mitochondrial targeting sequence region spans residues 68–117; the sequence is PCALRFTSARRMETTVNAPQSLPTPLHKRTLGLSPRSTTWIEEYIKDCVF.

It belongs to the orthohepadnavirus protein X family. In terms of assembly, may form homodimer. May interact with host CEBPA, CFLAR, CREB1, DDB1, E4F1, HBXIP, HSPD1/HSP60, NFKBIA, POLR2E and SMAD4. Interacts with host SMC5-SMC6 complex and induces its degradation. Interacts with host TRPC4AP; leading to prevent ubiquitination of TRPC4AP. Interacts with host PLSCR1; this interaction promotes ubiquitination and degradation of HBx and impairs HBx-mediated cell proliferation. A fraction may be phosphorylated in insect cells and HepG2 cells, a human hepatoblastoma cell line. Phosphorylated in vitro by host protein kinase C or mitogen-activated protein kinase. N-acetylated in insect cells.

The protein localises to the host cytoplasm. It is found in the host nucleus. It localises to the host mitochondrion. Its function is as follows. Multifunctional protein that plays a role in silencing host antiviral defenses and promoting viral transcription. Does not seem to be essential for HBV infection. May be directly involved in development of cirrhosis and liver cancer (hepatocellular carcinoma). Most of cytosolic activities involve modulation of cytosolic calcium. The effect on apoptosis is controversial depending on the cell types in which the studies have been conducted. May induce apoptosis by localizing in mitochondria and causing loss of mitochondrial membrane potential. May also modulate apoptosis by binding host CFLAR, a key regulator of the death-inducing signaling complex (DISC). Promotes viral transcription by using the host E3 ubiquitin ligase DDB1 to target the SMC5-SMC6 complex to proteasomal degradation. This host complex would otherwise bind to viral episomal DNA, and prevents its transcription. Moderately stimulates transcription of many different viral and cellular transcription elements. Promoters and enhancers stimulated by HBx contain DNA binding sites for NF-kappa-B, AP-1, AP-2, c-EBP, ATF/CREB, or the calcium-activated factor NF-AT. The chain is Protein X from Homo sapiens (Human).